The following is a 40-amino-acid chain: Conotoxin Bt14.16 (40 aa).

Residues 1 to 18 (SDGRDAAVIYTESDVIAR) constitute a propeptide that is removed on maturation. 2 disulfide bridges follow: Cys21–Cys36 and Cys24–Cys29.

The protein belongs to the conotoxin A superfamily. As to expression, expressed by the venom duct.

Its subcellular location is the secreted. Functionally, probable neurotoxin with unknown target. Possibly targets ion channels. This Conus betulinus (Beech cone) protein is Conotoxin Bt14.16.